The primary structure comprises 359 residues: Probable ribonucleotide transport ATP-binding protein mkl (359 aa).

Positions 28-264 (IEVNGLTKSF…DEPVVRQFLN (237 aa)) constitute an ABC transporter domain. ATP is bound at residue 60-67 (GPSGTGKS).

Belongs to the ABC transporter superfamily.

Its function is as follows. Not known, could be involved in the transport of ribonucleotides. The sequence is that of Probable ribonucleotide transport ATP-binding protein mkl (mkl) from Mycobacterium bovis (strain ATCC BAA-935 / AF2122/97).